Consider the following 475-residue polypeptide: MKITLPEFEKARVLVVGDVMLDRYWHGPTGRISPEAPVPVVKVEHIEERPGGAANVALNSAALGAHAVLLGLTGQDEAADALAGQMAGVKVACDFVRLADYPTITKLRVLSRNQQLLRLDFEEAFHDVDSTLLMGKVEQALPHSDVMILSDYGKGALNDVPSMIQRARAAGIPVLVDPKGTDFEKYRGATLLTPNMSEFEAVVGKVKSEEELVAKGLELVKRFELEALLVTRSENGMTLIREGQPELHLPAQAHEVYDVTGAGDTVISTLATSLAAGKSLDEACALANTAAGIVVGKLGTSTVSPVELANALYTEQETGFGVMSEAQLKIAVQAARLRGEKVVMTNGCFDILHAGHVSYLANAGKLGDRLIVAVNTDESVRRLKGPGRPVNPTERRMAVLAALGAVDWVVPFAEDTPQRLIAEVLPDLLVKGGDYKPEEIAGYAEVTANGGEVRVLNFEDGCSTSDIIKTIRERG.

A ribokinase region spans residues 1–318 (MKITLPEFEK…ANALYTEQET (318 aa)). 195-198 (NMSE) is an ATP binding site. The active site involves Asp-264. The interval 344-475 (MTNGCFDILH…DIIKTIRERG (132 aa)) is cytidylyltransferase.

The protein in the N-terminal section; belongs to the carbohydrate kinase PfkB family. This sequence in the C-terminal section; belongs to the cytidylyltransferase family. As to quaternary structure, homodimer.

It carries out the reaction D-glycero-beta-D-manno-heptose 7-phosphate + ATP = D-glycero-beta-D-manno-heptose 1,7-bisphosphate + ADP + H(+). The enzyme catalyses D-glycero-beta-D-manno-heptose 1-phosphate + ATP + H(+) = ADP-D-glycero-beta-D-manno-heptose + diphosphate. The protein operates within nucleotide-sugar biosynthesis; ADP-L-glycero-beta-D-manno-heptose biosynthesis; ADP-L-glycero-beta-D-manno-heptose from D-glycero-beta-D-manno-heptose 7-phosphate: step 1/4. It functions in the pathway nucleotide-sugar biosynthesis; ADP-L-glycero-beta-D-manno-heptose biosynthesis; ADP-L-glycero-beta-D-manno-heptose from D-glycero-beta-D-manno-heptose 7-phosphate: step 3/4. Its function is as follows. Catalyzes the phosphorylation of D-glycero-D-manno-heptose 7-phosphate at the C-1 position to selectively form D-glycero-beta-D-manno-heptose-1,7-bisphosphate. In terms of biological role, catalyzes the ADP transfer from ATP to D-glycero-beta-D-manno-heptose 1-phosphate, yielding ADP-D-glycero-beta-D-manno-heptose. The chain is Bifunctional protein HldE from Aeromonas hydrophila subsp. hydrophila (strain ATCC 7966 / DSM 30187 / BCRC 13018 / CCUG 14551 / JCM 1027 / KCTC 2358 / NCIMB 9240 / NCTC 8049).